The following is a 450-amino-acid chain: 3-phosphoshikimate 1-carboxyvinyltransferase (450 aa).

3-phosphoshikimate is bound by residues Lys28, Ser29, and Arg33. Phosphoenolpyruvate is bound at residue Lys28. 2 residues coordinate phosphoenolpyruvate: Gly100 and Arg128. Positions 173, 175, 326, and 353 each coordinate 3-phosphoshikimate. Gln175 contributes to the phosphoenolpyruvate binding site. Asp326 (proton acceptor) is an active-site residue. Positions 357 and 402 each coordinate phosphoenolpyruvate.

It belongs to the EPSP synthase family. As to quaternary structure, monomer.

It localises to the cytoplasm. It catalyses the reaction 3-phosphoshikimate + phosphoenolpyruvate = 5-O-(1-carboxyvinyl)-3-phosphoshikimate + phosphate. The protein operates within metabolic intermediate biosynthesis; chorismate biosynthesis; chorismate from D-erythrose 4-phosphate and phosphoenolpyruvate: step 6/7. Its function is as follows. Catalyzes the transfer of the enolpyruvyl moiety of phosphoenolpyruvate (PEP) to the 5-hydroxyl of shikimate-3-phosphate (S3P) to produce enolpyruvyl shikimate-3-phosphate and inorganic phosphate. The polypeptide is 3-phosphoshikimate 1-carboxyvinyltransferase (Brucella melitensis biotype 1 (strain ATCC 23456 / CCUG 17765 / NCTC 10094 / 16M)).